Reading from the N-terminus, the 604-residue chain is Protein hemingway (604 aa).

Disordered regions lie at residues 1-70 (MSGA…GNPH), 103-309 (NQLS…PTSQ), 359-387 (SDRR…GGGI), and 544-585 (TIKA…IDLD). Acidic residues-rich tracts occupy residues 8 to 38 (SDEE…YIEP), 135 to 183 (EDEA…DDAQ), 194 to 214 (DDSD…EDEP), and 288 to 300 (EEPE…EENQ). Positions 368–379 (EMSSMTETTMTS) are enriched in low complexity.

This sequence belongs to the CFAP97 family. In terms of tissue distribution, detected in ciliated sensory neurons at all stages of development, and in adult testis.

It localises to the cell projection. The protein resides in the cilium. Its subcellular location is the perikaryon. The protein localises to the cytoplasm. Its function is as follows. Involved in assembly and/or maintenance of motile cilia. Required during spermatogenesis for axoneme elongation. Necessary for optimal function of the chordotonal (hearing) organs. This chain is Protein hemingway, found in Drosophila melanogaster (Fruit fly).